Consider the following 265-residue polypeptide: Beta-lactamase OXA-48 (265 aa).

Residues 1–22 (MRVLALSAVFLVASIIGMPAVA) form the signal peptide. Residue S70 is the Acyl-ester intermediate of the active site. Residues S70, K73, S118, and R250 each contribute to the a beta-lactam site. Residue K73 is modified to N6-carboxylysine.

It belongs to the class-D beta-lactamase family. Monomer. Dimer. Carboxylated on the epsilon-amino group of a lysine, with the resulting carbamate functional group serving as a general base. Probably N-carboxylated at Lys-73 at neutral pH in vivo and undergoes complete N-decarboxylation, at pH 4.1, in vitro.

It catalyses the reaction a beta-lactam + H2O = a substituted beta-amino acid. Its activity is regulated as follows. Inhibited by avibactam, related diazabicyclooctane (DBO) derivatives and by bicyclic boronic acids, via a covalent binding to Ser-70. Inhibited by chloride, bromide and iodide ions. Not inhibited by the beta-lactamase-blocking agents, clavulanic acid or tazobactam. Functionally, class D beta-lactamase which confers resistance to the beta-lactam antibiotics, including amoxicillin, and moderate resistance to cephalosporins and carbapenems such as cephalothin and imipenem; in the DH10B strain of E.coli. Acts via hydrolysis of the beta-lactam ring. Has oxacillin-, cephalothin- and imipenem-hydrolyzing activities. The chain is Beta-lactamase OXA-48 from Klebsiella pneumoniae.